Here is a 419-residue protein sequence, read N- to C-terminus: UDP-N-acetylglucosamine 1-carboxyvinyltransferase (419 aa).

22–23 provides a ligand contact to phosphoenolpyruvate; the sequence is KN. Arg-95 is a binding site for UDP-N-acetyl-alpha-D-glucosamine. Residue Cys-119 is the Proton donor of the active site. Cys-119 bears the 2-(S-cysteinyl)pyruvic acid O-phosphothioketal mark. Residues 164-167, Asp-308, and Ile-330 contribute to the UDP-N-acetyl-alpha-D-glucosamine site; that span reads KVSV.

It belongs to the EPSP synthase family. MurA subfamily.

It is found in the cytoplasm. The enzyme catalyses phosphoenolpyruvate + UDP-N-acetyl-alpha-D-glucosamine = UDP-N-acetyl-3-O-(1-carboxyvinyl)-alpha-D-glucosamine + phosphate. It functions in the pathway cell wall biogenesis; peptidoglycan biosynthesis. In terms of biological role, cell wall formation. Adds enolpyruvyl to UDP-N-acetylglucosamine. The chain is UDP-N-acetylglucosamine 1-carboxyvinyltransferase from Rickettsia peacockii (strain Rustic).